Here is a 705-residue protein sequence, read N- to C-terminus: MPRQIPLEKVRNIGIMAHIDAGKTTTTERILYYTGRVHRLGEVHDGAATMDWMEQEKERGITITSAATTCFWQPRYGLLKDVRHRVNIIDTPGHVDFTVEVERSLRVLDGAVAVFCAVGGVEPQSETVWRQANKYKVPRIGYVNKMDRVGADFFNVVEMIKERLKANPVPIQIPIGQGEMFAGFIDLIRMKGIIYDKEDGTTYQEVEIPHDLENQAKTWRVNMLEAVSDIDDSLLEKYLNGEEITEEEVRRTLRVATLKTEIIPVLCGSSFKNKGVQFMLDAVVEYLPSPIDVGAVTGHSPRDEDEKIARQPDDSAPFAGLAFKITSDPYVGKLTFFRVYSGVLKSGSYVLNSITGKKERIGRLLQMHANHREDLDEVFAGDIAAAVGLKDTKTGDTLCDESKSIVLEKMVFPEPVIQIAIEPKTKADSDKLGMSLAKLAEEDPTFKVSMNEDTNQTLIAGMGELHLEIIVDRLKREFKVDANVGKPQVSYKETIRKKVEAEGKFVRQSGGKGQFGLVNIIVEPSEKDKGFEFVNEIKGGSIPKEYIPAVSQGIQEAMRNGIVAGYPMIDVKVTLFDGKYHEVDSSEMAFKIAGSIGFKEGARKAGAVLLEPIMAVEVITPEEYMGDVMGDLSGRRGHIEGMHQRAGAQVIKAKVPLSAMFGYSTELRSMTQGRANYSMEFHDYSEVPASIANEIVEKSSGKVTA.

A tr-type G domain is found at 8 to 291 (EKVRNIGIMA…AVVEYLPSPI (284 aa)). Residues 17 to 24 (AHIDAGKT), 90 to 94 (DTPGH), and 144 to 147 (NKMD) each bind GTP.

The protein belongs to the TRAFAC class translation factor GTPase superfamily. Classic translation factor GTPase family. EF-G/EF-2 subfamily.

It is found in the cytoplasm. Its function is as follows. Catalyzes the GTP-dependent ribosomal translocation step during translation elongation. During this step, the ribosome changes from the pre-translocational (PRE) to the post-translocational (POST) state as the newly formed A-site-bound peptidyl-tRNA and P-site-bound deacylated tRNA move to the P and E sites, respectively. Catalyzes the coordinated movement of the two tRNA molecules, the mRNA and conformational changes in the ribosome. This chain is Elongation factor G, found in Chloroherpeton thalassium (strain ATCC 35110 / GB-78).